The following is a 570-amino-acid chain: Proline--tRNA ligase (570 aa).

Belongs to the class-II aminoacyl-tRNA synthetase family. ProS type 1 subfamily. In terms of assembly, homodimer.

Its subcellular location is the cytoplasm. The enzyme catalyses tRNA(Pro) + L-proline + ATP = L-prolyl-tRNA(Pro) + AMP + diphosphate. Functionally, catalyzes the attachment of proline to tRNA(Pro) in a two-step reaction: proline is first activated by ATP to form Pro-AMP and then transferred to the acceptor end of tRNA(Pro). As ProRS can inadvertently accommodate and process non-cognate amino acids such as alanine and cysteine, to avoid such errors it has two additional distinct editing activities against alanine. One activity is designated as 'pretransfer' editing and involves the tRNA(Pro)-independent hydrolysis of activated Ala-AMP. The other activity is designated 'posttransfer' editing and involves deacylation of mischarged Ala-tRNA(Pro). The misacylated Cys-tRNA(Pro) is not edited by ProRS. The sequence is that of Proline--tRNA ligase from Geobacter metallireducens (strain ATCC 53774 / DSM 7210 / GS-15).